A 428-amino-acid polypeptide reads, in one-letter code: Tubby-like F-box protein 5 (428 aa).

A disordered region spans residues 17–65 (IGSMSRRAADGRAGGGRGGSRHSWPVLWSEQQQPPQQQQLQRQEHQQQQ). Low complexity predominate over residues 47–65 (QQQPPQQQQLQRQEHQQQQ). Residues 65 to 117 (QGRWANLPPELLLDVIQRVEASEATWPARRQVVACAAVCRSWREVTKEVVKTL) form the F-box domain.

It belongs to the TUB family. In terms of tissue distribution, ubiquitous.

This chain is Tubby-like F-box protein 5 (TULP5), found in Oryza sativa subsp. japonica (Rice).